A 95-amino-acid chain; its full sequence is Aspartyl/glutamyl-tRNA(Asn/Gln) amidotransferase subunit C (95 aa).

This sequence belongs to the GatC family. In terms of assembly, heterotrimer of A, B and C subunits.

The enzyme catalyses L-glutamyl-tRNA(Gln) + L-glutamine + ATP + H2O = L-glutaminyl-tRNA(Gln) + L-glutamate + ADP + phosphate + H(+). It carries out the reaction L-aspartyl-tRNA(Asn) + L-glutamine + ATP + H2O = L-asparaginyl-tRNA(Asn) + L-glutamate + ADP + phosphate + 2 H(+). Allows the formation of correctly charged Asn-tRNA(Asn) or Gln-tRNA(Gln) through the transamidation of misacylated Asp-tRNA(Asn) or Glu-tRNA(Gln) in organisms which lack either or both of asparaginyl-tRNA or glutaminyl-tRNA synthetases. The reaction takes place in the presence of glutamine and ATP through an activated phospho-Asp-tRNA(Asn) or phospho-Glu-tRNA(Gln). This Methylococcus capsulatus (strain ATCC 33009 / NCIMB 11132 / Bath) protein is Aspartyl/glutamyl-tRNA(Asn/Gln) amidotransferase subunit C.